The chain runs to 382 residues: PPE family protein PPE44 (382 aa).

This sequence belongs to the mycobacterial PPE family.

The protein localises to the secreted. It localises to the cell wall. It is found in the cell surface. Its function is as follows. Virulence factor that modulates host innate immune response. This Mycobacterium tuberculosis (strain CDC 1551 / Oshkosh) protein is PPE family protein PPE44.